The following is a 534-amino-acid chain: uncharacterized protein (534 aa).

5 helical membrane-spanning segments follow: residues 4 to 22, 24 to 46, 56 to 75, 82 to 104, and 134 to 156; these read ILVLLCVIALGLLVGRVSF, GISLGTSAILFVALLAGHYGWTI, ALFVYCVGISAGPTFFRGLA, AITGSVIVLTGVAVTWTSARLLG, and PAAVAVGFGVAYPIGIIAVVLFV. Residues 167–187 form a disordered region; that stretch reads GDSDGTDSASETSGQSSAEIA. Over residues 172–187 the composition is skewed to polar residues; that stretch reads TDSASETSGQSSAEIA. RCK C-terminal domains lie at 180–264 and 265–349; these read GQSS…TLGE and LQDT…AVGH. The next 6 membrane-spanning stretches (helical) occupy residues 359–378, 382–401, 408–430, 445–467, 479–501, and 511–533; these read LLSLVAGIVLGIFVGNLSLQ, FSMSLGIAGGPLMVGLILGH, IRGSYPPAAMLLMTEGGLALFLA, MERGAMLCVAAAAIAIIPLLVGF, WQSLGATCGGMTSTPGLAVLTGA, and YVAAYPVALVLITVAAPWLVELI.

This sequence belongs to the AAE transporter (TC 2.A.81) family.

The protein resides in the cell membrane. This is an uncharacterized protein from Rhodopirellula baltica (strain DSM 10527 / NCIMB 13988 / SH1).